A 136-amino-acid chain; its full sequence is Glutamate mutase sigma subunit (136 aa).

The 134-residue stretch at 3–136 folds into the B12-binding domain; that stretch reads KKKIVIGVIG…IIDLKKDFKI (134 aa). Residues 13-17, histidine 16, and 61-63 each bind adenosylcob(III)alamin; these read SDCHT and SSI.

Belongs to the methylaspartate mutase GlmS subunit family. In terms of assembly, heterotetramer composed of 2 epsilon subunits (GlmE) and 2 sigma subunits (GlmS). GlmE exists as a homodimer and GlmS as a monomer. It depends on adenosylcob(III)alamin as a cofactor.

It catalyses the reaction (2S,3S)-3-methyl-L-aspartate = L-glutamate. It functions in the pathway amino-acid degradation; L-glutamate degradation via mesaconate pathway; acetate and pyruvate from L-glutamate: step 1/4. Functionally, catalyzes the carbon skeleton rearrangement of L-glutamate to L-threo-3-methylaspartate ((2S,3S)-3-methylaspartate). The chain is Glutamate mutase sigma subunit from Fusobacterium nucleatum subsp. nucleatum (strain ATCC 25586 / DSM 15643 / BCRC 10681 / CIP 101130 / JCM 8532 / KCTC 2640 / LMG 13131 / VPI 4355).